The following is a 623-amino-acid chain: MYAQHLRKWSLKTKKQLMPLILLIISYMLLLNTCVLSSSATTQQQQQQQQQQQHLPRLWEGSAEESSYYIPLSSDNGSGSSESSAESGSSSSRSSSNNIDNNILSRLLSLNSNSLSSRSNVKLKPATVFDAGSSTPAQQEQHVAAVPEQQQQQQQQQQSMQKVPNTLINSQIYNLLYNGMPSEAASSKMRRHIQPSQLPHQPESRAQLPSNYSSRPAVRSYLIESYEMPESMLEDRSPEQAARSRRDGSNTNGSRQQQRTGHRQQLQQDKRDHRRQRQDQQKEQRQQQQQRQHKSGNKHQQQQQQRRKHQRKHQRYNRYCSARDPAQLAFAAPTVFQGVFKSMSADRRVNFSATMKVEKVYKQQHDLQLPTLVRLQFALSNSSGECDIYRERLMPRGMLRSGNDLQQASDISYMMFVQQTNPGNFTILGQPMRVTHLVVEAVETAVSENYTQNAEVTKIFSKPSKAIIKHGKKLRIVCEVSGQPPPKVTWFKDEKSINRKRNIYQFKHHKRRSELIVRSFNSSSDAGRYECRAKNKASKAIAKRRIMIKASPVHFPTDRSASGIPCNFDYCFHNGTCRMIPDINEVYCRCPTEYFGNRCENKWPDSRYFVAIYGQIHTLNNDY.

The signal sequence occupies residues 1 to 40 (MYAQHLRKWSLKTKKQLMPLILLIISYMLLLNTCVLSSSA). Disordered stretches follow at residues 70-98 (IPLS…SSNN), 130-162 (DAGS…SMQK), 184-214 (AASS…NYSS), and 229-317 (PESM…QRYN). Low complexity-rich tracts occupy residues 72 to 98 (LSSD…SSNN) and 136 to 158 (PAQQ…QQQQ). N76 carries N-linked (GlcNAc...) asparagine glycosylation. N211 carries N-linked (GlcNAc...) asparagine glycosylation. The segment covering 233-248 (LEDRSPEQAARSRRDG) has biased composition (basic and acidic residues). Residue N252 is glycosylated (N-linked (GlcNAc...) asparagine). Residues 255–267 (RQQQRTGHRQQLQ) are compositionally biased toward low complexity. Over residues 305–316 (QRRKHQRKHQRY) the composition is skewed to basic residues. 6 N-linked (GlcNAc...) asparagine glycosylation sites follow: N350, N381, N424, N449, N521, and N574. The region spanning 457–542 (TKIFSKPSKA…AKNKASKAIA (86 aa)) is the Ig-like C2-type domain. Cystine bridges form between C478/C531, C566/C577, C571/C588, and C590/C599. An EGF-like domain is found at 561-599 (ASGIPCNFDYCFHNGTCRMIPDINEVYCRCPTEYFGNRC).

The protein resides in the secreted. Its function is as follows. Ligand for the EGF receptor. Seems to play a role in the global proliferation of wing disc cells and the larval patterning. Shows a strong synergistic genetic interaction with spi, suggesting a molecular interdependence. Required for the development of interveins cells. This chain is Protein vein (vn), found in Drosophila melanogaster (Fruit fly).